A 437-amino-acid chain; its full sequence is 3-deoxy-D-manno-octulosonic acid transferase (437 aa).

The helical; Signal-anchor transmembrane segment at 16–36 (VVLVCAFVIALPKLLYKMLVY) threads the bilayer. Glu70 serves as the catalytic Proton acceptor. CMP is bound by residues 279-280 (PR), 319-321 (IGL), and 346-349 (NLLE).

Belongs to the glycosyltransferase group 1 family. Glycosyltransferase 30 subfamily.

It is found in the cell inner membrane. The enzyme catalyses lipid IVA (E. coli) + CMP-3-deoxy-beta-D-manno-octulosonate = alpha-Kdo-(2-&gt;6)-lipid IVA (E. coli) + CMP + H(+). It catalyses the reaction alpha-Kdo-(2-&gt;6)-lipid IVA (E. coli) + CMP-3-deoxy-beta-D-manno-octulosonate = alpha-Kdo-(2-&gt;4)-alpha-Kdo-(2-&gt;6)-lipid IVA (E. coli) + CMP + H(+). The catalysed reaction is alpha-Kdo-(2-&gt;4)-alpha-Kdo-(2-&gt;6)-lipid IVA (E. coli) + CMP-3-deoxy-beta-D-manno-octulosonate = alpha-Kdo-(2-&gt;8)-alpha-Kdo-(2-&gt;4)-alpha-Kdo-(2-&gt;6)-lipid IVA (E. coli) + CMP + H(+). It functions in the pathway bacterial outer membrane biogenesis; LPS core biosynthesis. In terms of biological role, involved in lipopolysaccharide (LPS) biosynthesis. Catalyzes the transfer of three 3-deoxy-D-manno-octulosonate (Kdo) residues from CMP-Kdo to lipid IV(A), the tetraacyldisaccharide-1,4'-bisphosphate precursor of lipid A. Thus generates the genus-specific LPS epitope of Chlamydia, composed of the trisaccharide alpha-Kdo-(2-&gt;8)-alpha-Kdo-(2-&gt;4)-alpha-Kdo. The sequence is that of 3-deoxy-D-manno-octulosonic acid transferase (waaA) from Chlamydia pneumoniae (Chlamydophila pneumoniae).